Consider the following 251-residue polypeptide: MTTQSLEAEAKALNDRLEGLDLAGRLALVAGLEGRAVFTTSLGIEDQVITAALGSNRLDIEVATLKTGRLFNETVALIEATEEAYDILIKRYYPEKADIEDYVAQYGMNGFYESVEARHACCGVRKLRPLARALEGASYWITGLRRGQSGNRAATPYAEADLERGLIKINPLADWDIDVIRAHVAAEAIPVNPLHGRGYPSIGCEPCTRAIKPGEPERAGRWWWENDEKRECGLHVAEAASSIIPNASSAA.

[4Fe-4S] cluster is bound by residues Cys-121, Cys-122, Cys-204, and Cys-207. Cys-232 serves as the catalytic Nucleophile; cysteine thiosulfonate intermediate.

It belongs to the PAPS reductase family. CysH subfamily. Requires [4Fe-4S] cluster as cofactor.

It localises to the cytoplasm. The enzyme catalyses [thioredoxin]-disulfide + sulfite + AMP + 2 H(+) = adenosine 5'-phosphosulfate + [thioredoxin]-dithiol. The protein operates within sulfur metabolism; hydrogen sulfide biosynthesis; sulfite from sulfate. Its function is as follows. Catalyzes the formation of sulfite from adenosine 5'-phosphosulfate (APS) using thioredoxin as an electron donor. The sequence is that of Adenosine 5'-phosphosulfate reductase from Sinorhizobium fredii (strain NBRC 101917 / NGR234).